Consider the following 357-residue polypeptide: 3-isopropylmalate dehydrogenase (357 aa).

G76–E89 contacts NAD(+). Residues R96, R106, R135, and D223 each coordinate substrate. Residues D223, D247, and D251 each coordinate Mg(2+). G281–N293 provides a ligand contact to NAD(+).

The protein belongs to the isocitrate and isopropylmalate dehydrogenases family. LeuB type 1 subfamily. As to quaternary structure, homodimer. It depends on Mg(2+) as a cofactor. Requires Mn(2+) as cofactor.

It localises to the cytoplasm. The catalysed reaction is (2R,3S)-3-isopropylmalate + NAD(+) = 4-methyl-2-oxopentanoate + CO2 + NADH. It participates in amino-acid biosynthesis; L-leucine biosynthesis; L-leucine from 3-methyl-2-oxobutanoate: step 3/4. In terms of biological role, catalyzes the oxidation of 3-carboxy-2-hydroxy-4-methylpentanoate (3-isopropylmalate) to 3-carboxy-4-methyl-2-oxopentanoate. The product decarboxylates to 4-methyl-2 oxopentanoate. This Helicobacter hepaticus (strain ATCC 51449 / 3B1) protein is 3-isopropylmalate dehydrogenase.